We begin with the raw amino-acid sequence, 434 residues long: Elongation factor 1-alpha (434 aa).

In terms of domain architecture, tr-type G spans 5–232 (KPHINLVVIG…DNVHPPKRPV (228 aa)). The tract at residues 14-21 (GHVVAGKS) is G1. GTP is bound at residue 14 to 21 (GHVVAGKS). Positions 70–74 (GITID) are G2. A G3 region spans residues 91–94 (DAPG). GTP-binding positions include 91–95 (DAPGH) and 153–156 (NKMD). The tract at residues 153–156 (NKMD) is G4. Residues 196 to 198 (SGF) are G5.

The protein belongs to the TRAFAC class translation factor GTPase superfamily. Classic translation factor GTPase family. EF-Tu/EF-1A subfamily.

The protein localises to the cytoplasm. In terms of biological role, this protein promotes the GTP-dependent binding of aminoacyl-tRNA to the A-site of ribosomes during protein biosynthesis. This is Elongation factor 1-alpha from Blastocystis hominis.